The sequence spans 311 residues: Methionyl-tRNA formyltransferase (311 aa).

Position 112-115 (112-115) interacts with (6S)-5,6,7,8-tetrahydrofolate; the sequence is SLLP.

The protein belongs to the Fmt family.

It carries out the reaction L-methionyl-tRNA(fMet) + (6R)-10-formyltetrahydrofolate = N-formyl-L-methionyl-tRNA(fMet) + (6S)-5,6,7,8-tetrahydrofolate + H(+). In terms of biological role, attaches a formyl group to the free amino group of methionyl-tRNA(fMet). The formyl group appears to play a dual role in the initiator identity of N-formylmethionyl-tRNA by promoting its recognition by IF2 and preventing the misappropriation of this tRNA by the elongation apparatus. The protein is Methionyl-tRNA formyltransferase of Rhizobium meliloti (strain 1021) (Ensifer meliloti).